The primary structure comprises 1101 residues: Nuclear pore complex protein NUP107 (1101 aa).

This sequence belongs to the nucleoporin Nup84/Nup107 family. As to quaternary structure, part of the nuclear pore complex (NPC). The NPC has an eight-fold symmetrical structure comprising a central transport channel and two rings, the cytoplasmic and nuclear rings, to which eight filaments are attached. The cytoplasmic filaments have loose ends, while the nuclear filaments are joined in a distal ring, forming a nuclear basket. NPCs are highly dynamic in configuration and composition, and can be devided in 3 subcomplexes, the NUP62 subcomplex, the NUP107-160 subcomplex and the NUP93 subcomplex, containing approximately 30 different nucleoporin proteins.

The protein localises to the nucleus envelope. Its subcellular location is the nucleus. The protein resides in the nuclear pore complex. This Arabidopsis thaliana (Mouse-ear cress) protein is Nuclear pore complex protein NUP107.